The chain runs to 1048 residues: Probable beta-glucosidase E (1048 aa).

The tract at residues M1–S54 is disordered. The Cytoplasmic segment spans residues M1–W150. The segment covering S36 to P47 has biased composition (low complexity). The chain crosses the membrane as a helical; Signal-anchor for type II membrane protein span at residues W151 to L171. Residues A172–Y1048 are Extracellular-facing. Residues N216, N224, and N410 are each glycosylated (N-linked (GlcNAc...) asparagine). D438 is an active-site residue. N481, N520, N578, N895, and N991 each carry an N-linked (GlcNAc...) asparagine glycan. A disordered region spans residues W508–D527.

The protein belongs to the glycosyl hydrolase 3 family.

It is found in the cell membrane. It catalyses the reaction Hydrolysis of terminal, non-reducing beta-D-glucosyl residues with release of beta-D-glucose.. It functions in the pathway glycan metabolism; cellulose degradation. In terms of biological role, beta-glucosidases are one of a number of cellulolytic enzymes involved in the degradation of cellulosic biomass. Catalyzes the last step releasing glucose from the inhibitory cellobiose. In Aspergillus oryzae (strain ATCC 42149 / RIB 40) (Yellow koji mold), this protein is Probable beta-glucosidase E (bglE).